Here is a 472-residue protein sequence, read N- to C-terminus: Protein c-ets-2-A (472 aa).

Residues 85 to 170 form the PNT domain; the sequence is NTFNGFAKKR…EHLEEMMKEH (86 aa). The segment at residues 366-446 is a DNA-binding region (ETS); it reads IQLWQFLLEL…SGKRYVYRFV (81 aa).

Belongs to the ETS family.

Its subcellular location is the nucleus. Functionally, probable transcription factor. The sequence is that of Protein c-ets-2-A (ets2-a) from Xenopus laevis (African clawed frog).